A 173-amino-acid chain; its full sequence is Mitochondrial holo-[acyl-carrier-protein] synthase (173 aa).

This sequence belongs to the P-Pant transferase superfamily. AcpS family.

The protein localises to the mitochondrion. It carries out the reaction apo-[ACP] + CoA = holo-[ACP] + adenosine 3',5'-bisphosphate + H(+). Its function is as follows. Transfers the 4'-phosphopantetheine moiety from coenzyme A to a Ser of mitochondrial acyl-carrier-protein. The sequence is that of Mitochondrial holo-[acyl-carrier-protein] synthase (PPT2) from Saccharomyces cerevisiae (strain ATCC 204508 / S288c) (Baker's yeast).